A 174-amino-acid chain; its full sequence is Repair DNA polymerase X (174 aa).

The interval 42 to 51 (REEKMLNDVD) is involved in ssDNA binding. The Mg(2+) site is built by aspartate 49 and aspartate 51. The cysteines at positions 81 and 86 are disulfide-linked. Aspartate 100 is a binding site for Mg(2+).

Belongs to the DNA polymerase type-X family. Requires Mg(2+) as cofactor.

The protein resides in the virion. The catalysed reaction is DNA(n) + a 2'-deoxyribonucleoside 5'-triphosphate = DNA(n+1) + diphosphate. Its function is as follows. Error-prone polymerase lacking a proofreading 3'-5' exonuclease which catalyzes the gap-filling reaction during the DNA repair process. Specifically binds intermediates in the single-nucleotide base-excision repair process. Also catalyzes DNA polymerization with low nucleotide-insertion fidelity. Probably acts as a strategic DNA mutase, which gives rise to a rapid emergence of variants. Generates mismatched G-G pairs, in that case, the polymerase first binds the deoxynucleotide followed by mismatch formation. Together with the viral DNA ligase, fills the single nucleotide gaps generated by the AP endonuclease. Binds DNA with high affinity via the helix alphaE. The chain is Repair DNA polymerase X from Ornithodoros (relapsing fever ticks).